Here is a 396-residue protein sequence, read N- to C-terminus: Phosphopentomutase (396 aa).

Aspartate 13, aspartate 288, histidine 293, aspartate 329, histidine 330, and histidine 341 together coordinate Mn(2+).

It belongs to the phosphopentomutase family. Mn(2+) serves as cofactor.

It is found in the cytoplasm. It catalyses the reaction 2-deoxy-alpha-D-ribose 1-phosphate = 2-deoxy-D-ribose 5-phosphate. The enzyme catalyses alpha-D-ribose 1-phosphate = D-ribose 5-phosphate. Its pathway is carbohydrate degradation; 2-deoxy-D-ribose 1-phosphate degradation; D-glyceraldehyde 3-phosphate and acetaldehyde from 2-deoxy-alpha-D-ribose 1-phosphate: step 1/2. Functionally, isomerase that catalyzes the conversion of deoxy-ribose 1-phosphate (dRib-1-P) and ribose 1-phosphate (Rib-1-P) to deoxy-ribose 5-phosphate (dRib-5-P) and ribose 5-phosphate (Rib-5-P), respectively. The chain is Phosphopentomutase from Clostridium beijerinckii (strain ATCC 51743 / NCIMB 8052) (Clostridium acetobutylicum).